We begin with the raw amino-acid sequence, 363 residues long: 1-aminocyclopropane-1-carboxylate oxidase homolog (363 aa).

One can recognise a Fe2OG dioxygenase domain in the interval 212 to 312; sequence FHLFCSCNYY…MSITCFFGES (101 aa). His-236, Asp-238, and His-292 together coordinate Fe cation.

This sequence belongs to the iron/ascorbate-dependent oxidoreductase family.

This is 1-aminocyclopropane-1-carboxylate oxidase homolog (ACO3) from Solanum lycopersicum (Tomato).